A 395-amino-acid chain; its full sequence is Nickel and cobalt resistance protein CnrB (395 aa).

A helical transmembrane segment spans residues 13-33 (MIAGVAAVAAAVGFGAAHLPV). Residues 35-55 (EKSPASTQAPEAQKPQSAPVK) form a disordered region. A compositionally biased stretch (polar residues) spans 37-50 (SPASTQAPEAQKPQ). A coiled-coil region spans residues 140–193 (AAERKVAQAKADLARKTYEREASLFQQGVTPRQEMEAAKAALDVAQAEALRAAT).

It belongs to the membrane fusion protein (MFP) (TC 8.A.1) family.

It is found in the cell inner membrane. Functionally, the products of the genes cnrA, cnrB, and cnrC are likely to form a membrane-bound protein complex catalyzing an energy-dependent efflux of Ni(2+) and Co(2+). The mechanism of action of the CnrCBA complex may be that of a proton/cation antiporter. In Cupriavidus metallidurans (strain ATCC 43123 / DSM 2839 / NBRC 102507 / CH34) (Ralstonia metallidurans), this protein is Nickel and cobalt resistance protein CnrB (cnrB).